The sequence spans 194 residues: MSAQYARRCGWTCHLPFDPTIPPNLRHWVTGEGSLTARLVAASERFRVRRLFQASARPFLDEWQVLGQCGREPALTREVLLICDEQPAIYAHTVVRERHARRDWPFLRGLGERPLGGRLFVDPAVRRDPFQFARLLPHHPLRQALLRILPAMAPVPMLPARRSVFRRGAGVMLVTEVFLPDLLTRPSRGLGQRY.

3 residues coordinate substrate: R77, L115, and E176.

Belongs to the UbiC family.

Its subcellular location is the cytoplasm. It catalyses the reaction chorismate = 4-hydroxybenzoate + pyruvate. It functions in the pathway cofactor biosynthesis; ubiquinone biosynthesis. In terms of biological role, removes the pyruvyl group from chorismate, with concomitant aromatization of the ring, to provide 4-hydroxybenzoate (4HB) for the ubiquinone pathway. In Cupriavidus pinatubonensis (strain JMP 134 / LMG 1197) (Cupriavidus necator (strain JMP 134)), this protein is Probable chorismate pyruvate-lyase.